Reading from the N-terminus, the 182-residue chain is Receptor activity-modifying protein 2 (182 aa).

An N-terminal signal peptide occupies residues 1–45 (MAPLRVERAPGGSQLAVTSAQRPAALRLPPLLLLLLLLLLGAVST). Residues 46-150 (SPESLNQSHP…VQPTFSDPPE (105 aa)) lie on the Extracellular side of the membrane. Residues N51, N92, and N137 are each glycosylated (N-linked (GlcNAc...) asparagine). 2 disulfide bridges follow: C76–C106 and C91–C138. The helical transmembrane segment at 151-172 (DVLLAMIIAPICLIPFLVTLVV) threads the bilayer. At 173 to 182 (WRSKDGDAQA) the chain is on the cytoplasmic side.

The protein belongs to the RAMP family. Heterodimer of CALCRL and RAMP2; the interaction forms the receptor complex for adrenomedullin/ADM. Heterodimer of CALCR and RAMP2; interaction forms the AMYR2 receptor complex for calcitonin/CALC and amylin/IAPP.

It is found in the cell membrane. Its function is as follows. Accessory protein that interacts with and modulates the function of G-protein coupled receptors including calcitonin gene-related peptide type 1 receptor (CALCRL) and calcitonin receptor (CALCR). Required for the transport of CALCRL to the plasma membrane. Together with CALCRL, form a receptor complex for adrenomedullin/ADM. Together with CALCR, act as a receptor complex for calcitonin/CT/CALC. Together with CALCR, also act as a receptor complex for amylin/IAPP. This is Receptor activity-modifying protein 2 from Rattus norvegicus (Rat).